Reading from the N-terminus, the 357-residue chain is 3-isopropylmalate dehydrogenase (357 aa).

76-89 contributes to the NAD(+) binding site; the sequence is GPQWDTIDPALRPE. Substrate-binding residues include R96, R106, R134, and D224. D224, D248, and D252 together coordinate Mg(2+). Residue 282 to 294 participates in NAD(+) binding; the sequence is GSAPDIAGQGVAN.

It belongs to the isocitrate and isopropylmalate dehydrogenases family. LeuB type 1 subfamily. In terms of assembly, homodimer. Mg(2+) is required as a cofactor. It depends on Mn(2+) as a cofactor.

The protein resides in the cytoplasm. It catalyses the reaction (2R,3S)-3-isopropylmalate + NAD(+) = 4-methyl-2-oxopentanoate + CO2 + NADH. The protein operates within amino-acid biosynthesis; L-leucine biosynthesis; L-leucine from 3-methyl-2-oxobutanoate: step 3/4. Functionally, catalyzes the oxidation of 3-carboxy-2-hydroxy-4-methylpentanoate (3-isopropylmalate) to 3-carboxy-4-methyl-2-oxopentanoate. The product decarboxylates to 4-methyl-2 oxopentanoate. The protein is 3-isopropylmalate dehydrogenase of Xylella fastidiosa (strain Temecula1 / ATCC 700964).